We begin with the raw amino-acid sequence, 137 residues long: uncharacterized protein (137 aa).

A Ubiquitin-like domain is found at 58–135 (VHVVAKTVRP…EVNLQMFLMN (78 aa)).

The protein localises to the cytoplasm. It is found in the nucleus. This is an uncharacterized protein from Schizosaccharomyces pombe (strain 972 / ATCC 24843) (Fission yeast).